A 404-amino-acid chain; its full sequence is Propionate kinase (404 aa).

It belongs to the acetokinase family. PduW subfamily.

It localises to the cytoplasm. It carries out the reaction propanoate + ATP = propanoyl phosphate + ADP. The protein operates within polyol metabolism; 1,2-propanediol degradation. Works with phosphate acetyltransferase (pta) to capture exogenous propionate and regenerate propionyl-CoA during degradation of 1,2-propanediol (1,2-PD). In Escherichia fergusonii (strain ATCC 35469 / DSM 13698 / CCUG 18766 / IAM 14443 / JCM 21226 / LMG 7866 / NBRC 102419 / NCTC 12128 / CDC 0568-73), this protein is Propionate kinase.